The primary structure comprises 193 residues: Leucyl/phenylalanyl-tRNA--protein transferase (193 aa).

Belongs to the L/F-transferase family.

The protein resides in the cytoplasm. It catalyses the reaction N-terminal L-lysyl-[protein] + L-leucyl-tRNA(Leu) = N-terminal L-leucyl-L-lysyl-[protein] + tRNA(Leu) + H(+). The catalysed reaction is N-terminal L-arginyl-[protein] + L-leucyl-tRNA(Leu) = N-terminal L-leucyl-L-arginyl-[protein] + tRNA(Leu) + H(+). It carries out the reaction L-phenylalanyl-tRNA(Phe) + an N-terminal L-alpha-aminoacyl-[protein] = an N-terminal L-phenylalanyl-L-alpha-aminoacyl-[protein] + tRNA(Phe). Its function is as follows. Functions in the N-end rule pathway of protein degradation where it conjugates Leu, Phe and, less efficiently, Met from aminoacyl-tRNAs to the N-termini of proteins containing an N-terminal arginine or lysine. The polypeptide is Leucyl/phenylalanyl-tRNA--protein transferase (Gloeobacter violaceus (strain ATCC 29082 / PCC 7421)).